The chain runs to 216 residues: Cytidylate kinase (216 aa).

Residue glycine 7–threonine 15 participates in ATP binding.

It belongs to the cytidylate kinase family. Type 1 subfamily.

Its subcellular location is the cytoplasm. The enzyme catalyses CMP + ATP = CDP + ADP. It carries out the reaction dCMP + ATP = dCDP + ADP. This is Cytidylate kinase from Chlamydia trachomatis serovar A (strain ATCC VR-571B / DSM 19440 / HAR-13).